Here is a 320-residue protein sequence, read N- to C-terminus: GTP 3',8-cyclase (320 aa).

The Radical SAM core domain maps to 4-227; that stretch reads LYSRRINYMR…METEKSSPAK (224 aa). Arg13 contacts GTP. Residues Cys20 and Cys24 each coordinate [4Fe-4S] cluster. Tyr26 serves as a coordination point for S-adenosyl-L-methionine. Cys27 is a [4Fe-4S] cluster binding site. Position 63 (Arg63) interacts with GTP. An S-adenosyl-L-methionine-binding site is contributed by Gly67. Thr94 contributes to the GTP binding site. Ser118 is an S-adenosyl-L-methionine binding site. Residue Lys155 participates in GTP binding. Met189 serves as a coordination point for S-adenosyl-L-methionine. [4Fe-4S] cluster is bound by residues Cys249 and Cys252. Position 254-256 (254-256) interacts with GTP; it reads RVR. A [4Fe-4S] cluster-binding site is contributed by Cys266. Positions 300 to 312 are enriched in basic and acidic residues; sequence KHDLLTDSHEESN. The segment at 300–320 is disordered; it reads KHDLLTDSHEESNRGMSQIGG.

Belongs to the radical SAM superfamily. MoaA family. Monomer and homodimer. [4Fe-4S] cluster serves as cofactor.

The catalysed reaction is GTP + AH2 + S-adenosyl-L-methionine = (8S)-3',8-cyclo-7,8-dihydroguanosine 5'-triphosphate + 5'-deoxyadenosine + L-methionine + A + H(+). It participates in cofactor biosynthesis; molybdopterin biosynthesis. In terms of biological role, catalyzes the cyclization of GTP to (8S)-3',8-cyclo-7,8-dihydroguanosine 5'-triphosphate. The protein is GTP 3',8-cyclase of Alkaliphilus oremlandii (strain OhILAs) (Clostridium oremlandii (strain OhILAs)).